We begin with the raw amino-acid sequence, 325 residues long: Transaldolase (325 aa).

Lys125 serves as the catalytic Schiff-base intermediate with substrate.

Belongs to the transaldolase family. Type 2 subfamily.

The protein resides in the cytoplasm. It catalyses the reaction D-sedoheptulose 7-phosphate + D-glyceraldehyde 3-phosphate = D-erythrose 4-phosphate + beta-D-fructose 6-phosphate. It participates in carbohydrate degradation; pentose phosphate pathway; D-glyceraldehyde 3-phosphate and beta-D-fructose 6-phosphate from D-ribose 5-phosphate and D-xylulose 5-phosphate (non-oxidative stage): step 2/3. Functionally, transaldolase is important for the balance of metabolites in the pentose-phosphate pathway. The sequence is that of Transaldolase from Campylobacter jejuni subsp. doylei (strain ATCC BAA-1458 / RM4099 / 269.97).